Reading from the N-terminus, the 218-residue chain is Ras-related protein R-Ras (218 aa).

The disordered stretch occupies residues 1–30 (MSSGAASGTGRGRPRGGGPGPRDPPPGETH). Residues 7 to 20 (SGTGRGRPRGGGPG) show a composition bias toward gly residues. Position 36–44 (36–44 (GGGGVGKSA)) interacts with GTP. The Effector region motif lies at 58–66 (YDPTIEDSY). GTP-binding positions include 83 to 87 (DTAGQ), 142 to 145 (NKAD), and 172 to 174 (SAK). Cysteine 215 is modified (cysteine methyl ester). The S-geranylgeranyl cysteine moiety is linked to residue cysteine 215. Positions 216–218 (VLL) are cleaved as a propeptide — removed in mature form.

Belongs to the small GTPase superfamily. Ras family. In terms of assembly, interacts with PLCE1. Interacts (active GTP-bound form preferentially) with RGS14. Interacts with OSBPL3. Interacts with ZDHHC19. In terms of processing, S-palmitoylated by ZDHHC19, leading to increased association with membranes and with rafts/caveolae as well as enhanced cell viability.

Its subcellular location is the cell membrane. The enzyme catalyses GTP + H2O = GDP + phosphate + H(+). In terms of biological role, GTP-binding protein with GTPase activity, likely involved in the regulation of MAPK signaling pathway and thereby controlling multiple cellular processes. Regulates the organization of the actin cytoskeleton. With OSPBL3, modulates integrin beta-1 (ITGB1) activity. The protein is Ras-related protein R-Ras (Rras) of Rattus norvegicus (Rat).